The chain runs to 447 residues: Beclin-1 (447 aa).

The span at 44–53 shows a compositional bias: low complexity; it reads PPLTAAPARP. The interval 44-71 is disordered; that stretch reads PPLTAAPARPGDAQEESALSEEAFTEGR. The BH3 signature appears at 105 to 124; sequence TMENLSRRLKVTGDLFDIMS. A coiled-coil region spans residues 139-266; it reads DTLLDQLDTQ…QLDKLKKTNV (128 aa). An evolutionary conserved domain (ECD) region spans residues 242–447; sequence DELKSVENQM…AWVSSQFYNK (206 aa). The segment at 422–447 is required for membrane-association; sequence WTKALKFMLTNLKWGLAWVSSQFYNK.

It belongs to the beclin family. Component of the PI3K (PI3KC3/PI3K-III/class III phosphatidylinositol 3-kinase) complex. Post-translationally, may be proteolytically processed by caspases; the C-terminal fragment(s) may induce apoptosis.

Its subcellular location is the cytoplasm. It is found in the golgi apparatus. The protein resides in the trans-Golgi network membrane. The protein localises to the endosome membrane. It localises to the endoplasmic reticulum membrane. Its subcellular location is the mitochondrion membrane. It is found in the cytoplasmic vesicle. The protein resides in the autophagosome. Plays a central role in autophagy. Acts as core subunit of different PI3K complex forms that mediate formation of phosphatidylinositol 3-phosphate and are believed to play a role in multiple membrane trafficking pathways such as initiation of autophagosomes, maturation of autophagosomes and endocytosis. Involved in regulation of degradative endocytic trafficking and required for the abscission step in cytokinesis, probably in the context of PI3KC3-C2. The sequence is that of Beclin-1 (BECN1) from Gallus gallus (Chicken).